The primary structure comprises 104 residues: Large ribosomal subunit protein uL24 (104 aa).

Positions 41 to 61 are disordered; sequence ISKKHKKPTPNEKQSGGIFEK.

This sequence belongs to the universal ribosomal protein uL24 family. As to quaternary structure, part of the 50S ribosomal subunit.

In terms of biological role, one of two assembly initiator proteins, it binds directly to the 5'-end of the 23S rRNA, where it nucleates assembly of the 50S subunit. One of the proteins that surrounds the polypeptide exit tunnel on the outside of the subunit. This chain is Large ribosomal subunit protein uL24, found in Wigglesworthia glossinidia brevipalpis.